Consider the following 219-residue polypeptide: Occludin/ELL domain-containing protein 1 (219 aa).

Residues 1–110 are disordered; that stretch reads MQIHAGPASR…DYELKYPPVT (110 aa). Positions 17-43 are enriched in low complexity; it reads LARLSGPEATCNSRPAARGRQRAAAPR. Residues 72–93 are compositionally biased toward basic and acidic residues; that stretch reads VFADELRPREPLHPEKHPRDLG. Residues 100-210 enclose the OCEL domain; sequence PDYELKYPPV…QIRKFDDQQD (111 aa).

The protein belongs to the ELL/occludin family.

The polypeptide is Occludin/ELL domain-containing protein 1 (Ocel1) (Mus musculus (Mouse)).